Reading from the N-terminus, the 56-residue chain is Large ribosomal subunit protein bL33 (56 aa).

This sequence belongs to the bacterial ribosomal protein bL33 family.

The chain is Large ribosomal subunit protein bL33 from Halorhodospira halophila (strain DSM 244 / SL1) (Ectothiorhodospira halophila (strain DSM 244 / SL1)).